Here is a 760-residue protein sequence, read N- to C-terminus: MRYNQFSYIPTSLERAAEELKELGFDLDLQKTAKANLESFLRKLFFHYPDSDYPLSHLIAKNDMDALSFFQSEQELSKEVFDLLALQVLGFIPGVDFTEADAFLDKLAFPIHFDETEIIKHIHHLLATRCKSGMTLIDDLVSQGMLTMDNDYHFFNGKSLATFDTSQLIREVVYVEAPLDTDQDGQLDLIKVNIIRPQSQKPLPTLMTPSPYHQGINEVANDKKLYRMEKELVVKKRRQITVEDRDFIPLETQPCKLPIGQNLESFSYINSYSLNDYFLARGFANIYVSGVGTAGSTGFMTSGDYAQIESFKAVIDWLNRRATAYTSHSKTHQVRADWANGLVCTTGKSYLGTMSTGLATTGVDGLAMIIAESAISSWYNYYRENGLVCSPGGYPGEDLDVLTELTYSRNLLAGDYLRHNDRYQELLNQQSQALDRQSGDYNQFWHDRNYLKNAHQIKCDVVYTHGLQDWNVKPRQVYEIFNALPSTINKHLFLHQGEHVYMHNWQSIDFRESMNALLCQKLLGLANDFSLPEMIWQDNTCPQNWQERKVFGTSTIKELDLGQELLLIDNHYGEDEFKAYGKDFRAFKAALFEGKANQALVDILLEEDLPINGEIVLQLKVKSSENKGLLSAQILDYGKKKRLGDLPIALTQSSIDNGQNFSRESLKELPFREDSYRVISKGFMNLQNRNNLSSIETIPNNKWMTVRLPLQPTIYHLEKGDTLRVILYTTDFEHTVRDNSNYALTIDLSQSQLIVPIASN.

Residues Ser349, Asp469, and His499 each act as charge relay system in the active site.

This sequence belongs to the peptidase S15 family. As to quaternary structure, homodimer.

The protein localises to the cytoplasm. The catalysed reaction is Hydrolyzes Xaa-Pro-|- bonds to release unblocked, N-terminal dipeptides from substrates including Ala-Pro-|-p-nitroanilide and (sequentially) Tyr-Pro-|-Phe-Pro-|-Gly-Pro-|-Ile.. Removes N-terminal dipeptides sequentially from polypeptides having unsubstituted N-termini provided that the penultimate residue is proline. In Streptococcus pyogenes serotype M18 (strain MGAS8232), this protein is Xaa-Pro dipeptidyl-peptidase.